The chain runs to 141 residues: Large ribosomal subunit protein uL11 (141 aa).

This sequence belongs to the universal ribosomal protein uL11 family. As to quaternary structure, part of the ribosomal stalk of the 50S ribosomal subunit. Interacts with L10 and the large rRNA to form the base of the stalk. L10 forms an elongated spine to which L12 dimers bind in a sequential fashion forming a multimeric L10(L12)X complex. One or more lysine residues are methylated.

In terms of biological role, forms part of the ribosomal stalk which helps the ribosome interact with GTP-bound translation factors. In Streptococcus thermophilus (strain CNRZ 1066), this protein is Large ribosomal subunit protein uL11.